Consider the following 311-residue polypeptide: Pyrimidine-specific ribonucleoside hydrolase RihA (311 aa).

The active site involves H240.

It belongs to the IUNH family. RihA subfamily.

Hydrolyzes cytidine or uridine to ribose and cytosine or uracil, respectively. In Shigella flexneri serotype 5b (strain 8401), this protein is Pyrimidine-specific ribonucleoside hydrolase RihA.